We begin with the raw amino-acid sequence, 239 residues long: Superoxide dismutase 1 copper chaperone (239 aa).

Residues Phe7–Ile70 form the HMA domain. Cys18 and Cys21 together coordinate Cu cation. Cysteines 28 and 65 form a disulfide. A Zn(2+)-binding site is contributed by Asp163. Residues Cys219 and Cys221 each coordinate Cu cation.

It belongs to the CCS1 family. It depends on Cu(2+) as a cofactor.

Its subcellular location is the cytoplasm. Copper chaperone for superoxide dismutase 1 (SOD1). Binds copper ions and delivers them specifically to SOD1. The polypeptide is Superoxide dismutase 1 copper chaperone (CCS1) (Candida glabrata (strain ATCC 2001 / BCRC 20586 / JCM 3761 / NBRC 0622 / NRRL Y-65 / CBS 138) (Yeast)).